We begin with the raw amino-acid sequence, 182 residues long: UPF0397 protein VS_II0189 (182 aa).

Helical transmembrane passes span 8-28 (VVVIAIGAALYGIGGLPMFGV), 41-61 (AVLALFSVLFGPIVGFLVGFI), 72-92 (WGVWLTWVLGSGIVGMVIGLF), 110-130 (FALFVVLALAGNVVGYGSSAF), and 146-166 (QLSIIAAGNTILIAVVGFLIL).

This sequence belongs to the UPF0397 family.

It is found in the cell membrane. The chain is UPF0397 protein VS_II0189 from Vibrio atlanticus (strain LGP32) (Vibrio splendidus (strain Mel32)).